Reading from the N-terminus, the 142-residue chain is Galactose-binding lectin (142 aa).

A Galectin domain is found at 1–141 (TYAEVESFGV…GTDIWDLLLL (141 aa)).

Homotetramer.

With respect to regulation, cytotoxic activity against L.infantum promastigotes is completely inhibited by D-galactose. Inhibition activity against biofilm formation by S.aureus and S.epidermidis is inhibited by alpha-lactose. Hemagglutination activity is inhibited by alpha-lactose (MIC=100 mM), beta-lactose (MIC=100 mM), lactulose (MIC=100 mM), bovine submaxillary mucin (BSM) (MIC=32 ug/ml), fetuin (MIC=16 ug/ml), porcine stomach mucin (PSM) type 2 (MIC=8 ug/ml) and PSM type 3 (MIC=8 ug/ml). Its function is as follows. Galactose-binding lectin. Displays antibacterial and hemagglutinin activity. Inhibits the growth of L.infantum promastigotes by damaging their membrane integrity and inducing cell apoptosis via the production of reactive oxygen species (ROS). Inhibition of L.infantum promastigotes appears to increase with time (MIC=1.2 uM/ml after 24 hours, MIC=0.9 uM/ml after 48 hours and MIC=0.6 uM/ml after 72 hours). Agglutinates Gram-negative and Gram-positive bacteria including E.coli, S.aureus and S.epidermidis, and inhibits biofilm formation by S.aureus and S.epidermidis. Displays hemagglutination activity towards all types of human erythrocytes (O, A and B) and rabbit erythrocytes. The polypeptide is Galactose-binding lectin (Chondrilla caribensis (Chicken liver sponge)).